Consider the following 427-residue polypeptide: uncharacterized protein (427 aa).

This sequence belongs to the MG032/MG096/MG288 family.

This is an uncharacterized protein from Mycoplasma pneumoniae (strain ATCC 29342 / M129 / Subtype 1) (Mycoplasmoides pneumoniae).